The primary structure comprises 245 residues: 6-carboxyhexanoate--CoA ligase (245 aa).

This sequence belongs to the BioW family. Homodimer. Requires Mg(2+) as cofactor.

The enzyme catalyses heptanedioate + ATP + CoA = 6-carboxyhexanoyl-CoA + AMP + diphosphate. It functions in the pathway metabolic intermediate metabolism; pimeloyl-CoA biosynthesis; pimeloyl-CoA from pimelate: step 1/1. Catalyzes the transformation of pimelate into pimeloyl-CoA with concomitant hydrolysis of ATP to AMP. This chain is 6-carboxyhexanoate--CoA ligase, found in Methanococcus vannielii (strain ATCC 35089 / DSM 1224 / JCM 13029 / OCM 148 / SB).